A 99-amino-acid polypeptide reads, in one-letter code: U8-agatoxin-Ao1a (99 aa).

Positions 1–19 (MKSLLFVTIAVYFVAQAVT) are cleaved as a signal peptide. Positions 20–45 (ANLLSNFLGSSLIDDDKGNMHKLYKR) are excised as a propeptide.

Belongs to the neurotoxin 02 (plectoxin) family. Post-translationally, contains 5 disulfide bonds. In terms of tissue distribution, expressed by the venom gland.

Its subcellular location is the secreted. This Agelena orientalis (Funnel-web spider) protein is U8-agatoxin-Ao1a.